The primary structure comprises 193 residues: Bcl-2-like protein 2 (193 aa).

Alanine 2 is modified (N-acetylalanine). Positions 9–29 (DTRALVADFVGYKLRQKGYVC) match the BH4 motif. The short motif at 85–104 (ELFQGGPNWGRLVAFFVFGA) is the BH1 element. The short motif at 136–151 (DWIHSSGGWAEFTALY) is the BH2 element. Alanine 177 bears the Phosphoserine mark.

This sequence belongs to the Bcl-2 family. In terms of assembly, interacts with HIF3A (via C-terminus domain). Interacts with BOP. Expressed (at protein level) in a wide range of tissues with highest levels in brain, spinal cord, testis, pancreas, heart, spleen and mammary glands. Moderate levels found in thymus, ovary and small intestine. Not detected in salivary gland, muscle or liver. Also expressed in cell lines of myeloid, fibroblast and epithelial origin. Not detected in most lymphoid cell lines.

The protein localises to the mitochondrion membrane. Promotes cell survival. Blocks dexamethasone-induced apoptosis. Mediates survival of postmitotic Sertoli cells by suppressing death-promoting activity of BAX. The sequence is that of Bcl-2-like protein 2 (BCL2L2) from Homo sapiens (Human).